Here is a 392-residue protein sequence, read N- to C-terminus: Nucleolysin TIAR (392 aa).

RRM domains follow at residues 9–102 (RTLY…WATT) and 114–192 (FHVF…WATR). Position 139 is an N6-acetyllysine (Lys-139). Ser-218 is modified (phosphoserine). Residues 222–294 (CTVYCGGIAS…HVVKCYWGKE (73 aa)) form the RRM 3 domain. The segment at 363–392 (GAQPPQGQAPPPVIPPPNQAGYGMASFPTQ) is disordered. The span at 369–380 (GQAPPPVIPPPN) shows a compositional bias: pro residues.

As to quaternary structure, interacts with FASTK. Post-translationally, phosphorylated by MAPK14 following DNA damage, releasing TIAR from GADD45A mRNA. Expressed both in primordial germ cells (PGCs) and in neighboring somatic cells.

It is found in the nucleus. The protein resides in the cytoplasm. The protein localises to the stress granule. It localises to the cytolytic granule. Functionally, RNA-binding protein involved in alternative pre-RNA splicing and in cytoplasmic stress granules formation. Shows a preference for uridine-rich RNAs. Activates splicing of alternative exons with weak 5' splice sites followed by a U-rich stretch on its own pre-mRNA and on TIA1 mRNA. Promotes the inclusion of TIA1 exon 5 to give rise to the long isoform (isoform a) of TIA1. Acts downstream of the stress-induced phosphorylation of EIF2S1/EIF2A to promote the recruitment of untranslated mRNAs to cytoplasmic stress granules (SG). Possesses nucleolytic activity against cytotoxic lymphocyte target cells. May be involved in apoptosis. In Mus musculus (Mouse), this protein is Nucleolysin TIAR (Tial1).